Consider the following 697-residue polypeptide: Exocyst complex component 7 (697 aa).

Positions 1–384 (MIPPQEASAR…FSTVLTVFPI (384 aa)) are SEC8 and ARHQ binding. Coiled-coil stretches lie at residues 5-42 (QEAS…TRNM) and 63-85 (VHKQ…SCLD). Position 133 is a phosphoserine (serine 133). The interval 238-270 (FRKSSSSSGVPYSPAIPNKRKDTPTKKPIKRPG) is disordered.

This sequence belongs to the EXO70 family. As to quaternary structure, the exocyst complex is composed of EXOC1, EXOC2, EXOC3, EXOC4, EXOC5, EXOC6, EXOC7 and EXOC8. Interacts with RAB11FIP3. Interacts with ARHQ in a GTP-dependent manner.

The protein localises to the cytoplasm. It localises to the cytosol. The protein resides in the cell membrane. It is found in the midbody. Its subcellular location is the midbody ring. Functionally, component of the exocyst complex involved in the docking of exocytic vesicles with fusion sites on the plasma membrane. In adipocytes, plays a crucial role in targeting SLC2A4 vesicle to the plasma membrane in response to insulin, perhaps directing the vesicle to the precise site of fusion. It is required for neuron survival and plays an essential role in cortical development. The polypeptide is Exocyst complex component 7 (Exoc7) (Mus musculus (Mouse)).